The primary structure comprises 446 residues: UDP-N-acetylmuramoylalanine--D-glutamate ligase (446 aa).

115 to 121 (GTNGKTT) lines the ATP pocket.

It belongs to the MurCDEF family.

The protein resides in the cytoplasm. The enzyme catalyses UDP-N-acetyl-alpha-D-muramoyl-L-alanine + D-glutamate + ATP = UDP-N-acetyl-alpha-D-muramoyl-L-alanyl-D-glutamate + ADP + phosphate + H(+). The protein operates within cell wall biogenesis; peptidoglycan biosynthesis. Its function is as follows. Cell wall formation. Catalyzes the addition of glutamate to the nucleotide precursor UDP-N-acetylmuramoyl-L-alanine (UMA). The protein is UDP-N-acetylmuramoylalanine--D-glutamate ligase of Trichlorobacter lovleyi (strain ATCC BAA-1151 / DSM 17278 / SZ) (Geobacter lovleyi).